A 391-amino-acid polypeptide reads, in one-letter code: Formate-dependent phosphoribosylglycinamide formyltransferase (391 aa).

Residues 18 to 19 (EL) and Glu78 contribute to the N(1)-(5-phospho-beta-D-ribosyl)glycinamide site. Residues Arg110, Lys151, 156–161 (SSGKGQ), 191–194 (EEFI), and Glu199 each bind ATP. In terms of domain architecture, ATP-grasp spans 115-305 (ELAAQQLGVR…EFELHLRAIL (191 aa)). Mg(2+) is bound by residues Glu264 and Glu276. N(1)-(5-phospho-beta-D-ribosyl)glycinamide contacts are provided by residues Asp283, Lys353, and 360–361 (RR).

The protein belongs to the PurK/PurT family. As to quaternary structure, homodimer.

It catalyses the reaction N(1)-(5-phospho-beta-D-ribosyl)glycinamide + formate + ATP = N(2)-formyl-N(1)-(5-phospho-beta-D-ribosyl)glycinamide + ADP + phosphate + H(+). It participates in purine metabolism; IMP biosynthesis via de novo pathway; N(2)-formyl-N(1)-(5-phospho-D-ribosyl)glycinamide from N(1)-(5-phospho-D-ribosyl)glycinamide (formate route): step 1/1. Its function is as follows. Involved in the de novo purine biosynthesis. Catalyzes the transfer of formate to 5-phospho-ribosyl-glycinamide (GAR), producing 5-phospho-ribosyl-N-formylglycinamide (FGAR). Formate is provided by PurU via hydrolysis of 10-formyl-tetrahydrofolate. This chain is Formate-dependent phosphoribosylglycinamide formyltransferase, found in Synechocystis sp. (strain ATCC 27184 / PCC 6803 / Kazusa).